Consider the following 101-residue polypeptide: Apolipoprotein C-II (101 aa).

The N-terminal stretch at Met-1 to Gly-22 is a signal peptide. A lipid binding region spans residues Ala-66–Leu-74. The interval Ser-78–Glu-101 is lipoprotein lipase cofactor.

This sequence belongs to the apolipoprotein C2 family. Proapolipoprotein C-II is synthesized as a sialic acid containing glycoprotein which is subsequently desialylated prior to its proteolytic processing. Post-translationally, proapolipoprotein C-II, the major form found in plasma undergoes proteolytic cleavage of its N-terminal hexapeptide to generate apolipoprotein C-II, which occurs as the minor form in plasma.

Its subcellular location is the secreted. Functionally, component of chylomicrons, very low-density lipoproteins (VLDL), low-density lipoproteins (LDL), and high-density lipoproteins (HDL) in plasma. Plays an important role in lipoprotein metabolism as an activator of lipoprotein lipase. Both proapolipoprotein C-II and apolipoprotein C-II can activate lipoprotein lipase. In Colobus guereza (Mantled guereza), this protein is Apolipoprotein C-II (APOC2).